The chain runs to 483 residues: Endoplasmic reticulum lectin 1 (483 aa).

Positions 1 to 33 (MEEGGGGVRSLVPGGPVLLVLCGLLEASGGGRA) are cleaved as a signal peptide. 2 consecutive MRH domains span residues 111–246 (SSCS…LCSH) and 342–469 (SYCF…ICKI). Cys113 and Cys126 are disulfide-bonded. A glycan (N-linked (GlcNAc...) asparagine) is linked at Asn195. Cystine bridges form between Cys199/Cys232, Cys215/Cys244, Cys344/Cys357, Cys421/Cys455, and Cys436/Cys467.

May form a complex with OS9, HSPA5, SYVN1, and SEL1L with which it interacts directly. Interacts (via PRKCSH 2 domain) with KREMEN2 (when glycosylated). Interacts with HSPA5. Post-translationally, isoform 1 and isoform 2 are N-glycosylated.

The protein localises to the endoplasmic reticulum lumen. Its function is as follows. Probable lectin that binds selectively to improperly folded lumenal proteins. May function in endoplasmic reticulum quality control and endoplasmic reticulum-associated degradation (ERAD) of both non-glycosylated proteins and glycoproteins. The protein is Endoplasmic reticulum lectin 1 (ERLEC1) of Homo sapiens (Human).